The primary structure comprises 279 residues: uncharacterized protein (279 aa).

The interval 136 to 279 (TSNATEASEK…FTSDSSDEED (144 aa)) is disordered. Residues 228-238 (NNGNGAVYSDS) are compositionally biased toward low complexity.

This is an uncharacterized protein from Invertebrate iridescent virus 3 (IIV-3).